Here is a 456-residue protein sequence, read N- to C-terminus: Bifunctional protein GlmU (456 aa).

The interval 1 to 229 (MLNNAMSVVI…LSEVEGVNNR (229 aa)) is pyrophosphorylase. Residues 11 to 14 (LAAG), K25, Q76, 81 to 82 (GT), 103 to 105 (YGD), G140, E154, N169, and N227 each bind UDP-N-acetyl-alpha-D-glucosamine. Residue D105 participates in Mg(2+) binding. N227 contributes to the Mg(2+) binding site. Residues 230-250 (LQLSRLERVYQSEQAEKLLLA) form a linker region. Positions 251-456 (GVMLRDPARF…EGWRRPVKKK (206 aa)) are N-acetyltransferase. The UDP-N-acetyl-alpha-D-glucosamine site is built by R333 and K351. H363 functions as the Proton acceptor in the catalytic mechanism. The UDP-N-acetyl-alpha-D-glucosamine site is built by Y366 and N377. Acetyl-CoA is bound by residues A380, 386–387 (NY), S405, A423, and R440.

It in the N-terminal section; belongs to the N-acetylglucosamine-1-phosphate uridyltransferase family. The protein in the C-terminal section; belongs to the transferase hexapeptide repeat family. In terms of assembly, homotrimer. The cofactor is Mg(2+).

It is found in the cytoplasm. It catalyses the reaction alpha-D-glucosamine 1-phosphate + acetyl-CoA = N-acetyl-alpha-D-glucosamine 1-phosphate + CoA + H(+). The catalysed reaction is N-acetyl-alpha-D-glucosamine 1-phosphate + UTP + H(+) = UDP-N-acetyl-alpha-D-glucosamine + diphosphate. It functions in the pathway nucleotide-sugar biosynthesis; UDP-N-acetyl-alpha-D-glucosamine biosynthesis; N-acetyl-alpha-D-glucosamine 1-phosphate from alpha-D-glucosamine 6-phosphate (route II): step 2/2. It participates in nucleotide-sugar biosynthesis; UDP-N-acetyl-alpha-D-glucosamine biosynthesis; UDP-N-acetyl-alpha-D-glucosamine from N-acetyl-alpha-D-glucosamine 1-phosphate: step 1/1. The protein operates within bacterial outer membrane biogenesis; LPS lipid A biosynthesis. Catalyzes the last two sequential reactions in the de novo biosynthetic pathway for UDP-N-acetylglucosamine (UDP-GlcNAc). The C-terminal domain catalyzes the transfer of acetyl group from acetyl coenzyme A to glucosamine-1-phosphate (GlcN-1-P) to produce N-acetylglucosamine-1-phosphate (GlcNAc-1-P), which is converted into UDP-GlcNAc by the transfer of uridine 5-monophosphate (from uridine 5-triphosphate), a reaction catalyzed by the N-terminal domain. This is Bifunctional protein GlmU from Escherichia coli O45:K1 (strain S88 / ExPEC).